Consider the following 146-residue polypeptide: Acidic phospholipase A2 S13-69J (146 aa).

A signal peptide spans 1 to 19 (MYPAHLLVLLAVCVSLLGA). A propeptide spanning residues 20 to 27 (ASIPPQPL) is cleaved from the precursor. 7 disulfide bridges follow: cysteine 38-cysteine 98, cysteine 54-cysteine 145, cysteine 56-cysteine 72, cysteine 71-cysteine 126, cysteine 78-cysteine 119, cysteine 87-cysteine 112, and cysteine 105-cysteine 117. 3 residues coordinate Ca(2+): tyrosine 55, glycine 57, and glycine 59. The active site involves histidine 75. Aspartate 76 contributes to the Ca(2+) binding site. Residue aspartate 120 is part of the active site.

The protein belongs to the phospholipase A2 family. Group I subfamily. D49 sub-subfamily. Requires Ca(2+) as cofactor. In terms of tissue distribution, expressed by the venom gland.

The protein localises to the secreted. The catalysed reaction is a 1,2-diacyl-sn-glycero-3-phosphocholine + H2O = a 1-acyl-sn-glycero-3-phosphocholine + a fatty acid + H(+). Functionally, snake venom phospholipase A2 (PLA2) that inhibits collagen-induced platelet aggregation. PLA2 catalyzes the calcium-dependent hydrolysis of the 2-acyl groups in 3-sn-phosphoglycerides. This Austrelaps superbus (Lowland copperhead snake) protein is Acidic phospholipase A2 S13-69J.